A 219-amino-acid polypeptide reads, in one-letter code: Pyridoxine/pyridoxamine 5'-phosphate oxidase (219 aa).

A disordered region spans residues 1 to 23 (MTSSVIPPSPSAADYAAEGDRPL). FMN is bound by residues 66 to 71 (RIVLLK), 81 to 82 (FT), lysine 88, and glutamine 110. Residue lysine 71 coordinates substrate. Substrate is bound by residues tyrosine 128, arginine 132, and serine 136. Residues 145–146 (QS) and tryptophan 191 each bind FMN. 197–199 (RMH) contacts substrate. Arginine 201 serves as a coordination point for FMN.

Belongs to the pyridoxamine 5'-phosphate oxidase family. As to quaternary structure, homodimer. The cofactor is FMN.

It catalyses the reaction pyridoxamine 5'-phosphate + O2 + H2O = pyridoxal 5'-phosphate + H2O2 + NH4(+). The enzyme catalyses pyridoxine 5'-phosphate + O2 = pyridoxal 5'-phosphate + H2O2. It participates in cofactor metabolism; pyridoxal 5'-phosphate salvage; pyridoxal 5'-phosphate from pyridoxamine 5'-phosphate: step 1/1. It functions in the pathway cofactor metabolism; pyridoxal 5'-phosphate salvage; pyridoxal 5'-phosphate from pyridoxine 5'-phosphate: step 1/1. Functionally, catalyzes the oxidation of either pyridoxine 5'-phosphate (PNP) or pyridoxamine 5'-phosphate (PMP) into pyridoxal 5'-phosphate (PLP). The protein is Pyridoxine/pyridoxamine 5'-phosphate oxidase of Hyphomonas neptunium (strain ATCC 15444).